The following is a 406-amino-acid chain: E3 ubiquitin-protein ligase RING1 (406 aa).

T24 bears the Phosphothreonine mark. Positions 30–234 (MDGTEIAVSP…GGAGSEDSGD (205 aa)) are necessary for transcriptional repression. S38 carries the post-translational modification Phosphoserine. Residues 48–88 (CPICLDMLKNTMTTKECLHRFCSDCIVTALRSGNKECPTCR) form an RING-type zinc finger. Phosphoserine is present on residues S140, S187, and S190. Disordered regions lie at residues 151–263 (HRAQ…GEIE) and 309–354 (QQQE…PSLE). Residues 175 to 187 (EPGEGEGDGEDIS) show a composition bias toward acidic residues. A Nuclear localization signal motif is present at residues 201–204 (KRPR). Over residues 205–228 (GGGAGGSSVGTGGGAAGGACGGAG) the composition is skewed to gly residues. T215 carries the phosphothreonine modification. A phosphoserine mark is found at S229 and S232. A necessary for interaction with CBX2 region spans residues 230 to 406 (EDSGDRGGTL…LCYAPTKDPK (177 aa)). Gly residues predominate over residues 235-244 (RGGTLGGGTL). Over residues 246–258 (PPSPPGAPSPPEP) the composition is skewed to pro residues. Phosphoserine occurs at positions 248 and 254. Residues 317-343 (GGPGGGASDTGGPDGGGGERGVSGGGE) show a composition bias toward gly residues.

In terms of assembly, component of chromatin-associated Polycomb (PcG) complexes. Part of the E2F6.com-1 complex in G0 phase composed of E2F6, MGA, MAX, TFDP1, CBX3, BAT8, EUHMTASE1, RING1, RNF2/RING2 MBLR, L3MBTL2 and YAF2. Interacts with CBX2 and PCGF6. Component of a PRC1-like complex. Component of repressive BCOR complex containing Polycomb group subcomplex at least composed of RYBP, PCGF1, BCOR and RNF2/RING2. Interacts with BMI1, PHC2, PCGF2, RNF2; CBX6, CBX7 and CBX8. Interacts with MN1. Interacts with USP26.

Its subcellular location is the nucleus speckle. It catalyses the reaction S-ubiquitinyl-[E2 ubiquitin-conjugating enzyme]-L-cysteine + [acceptor protein]-L-lysine = [E2 ubiquitin-conjugating enzyme]-L-cysteine + N(6)-ubiquitinyl-[acceptor protein]-L-lysine.. Its pathway is protein modification; protein ubiquitination. In terms of biological role, constitutes one of the E3 ubiquitin-protein ligases that mediate monoubiquitination of 'Lys-119' of histone H2A, thereby playing a central role in histone code and gene regulation. H2A 'Lys-119' ubiquitination gives a specific tag for epigenetic transcriptional repression and participates in X chromosome inactivation of female mammals. Essential component of a Polycomb group (PcG) multiprotein PRC1-like complex, a complex class required to maintain the transcriptionally repressive state of many genes, including Hox genes, throughout development. PcG PRC1 complex acts via chromatin remodeling and modification of histones, rendering chromatin heritably changed in its expressibility. Compared to RNF2/RING2, it does not have the main E3 ubiquitin ligase activity on histone H2A, and it may rather act as a modulator of RNF2/RING2 activity. This Rattus norvegicus (Rat) protein is E3 ubiquitin-protein ligase RING1.